The chain runs to 334 residues: Anthranilate phosphoribosyltransferase (334 aa).

Residues G81, 84-85, T89, 91-94, 109-117, and A121 each bind 5-phospho-alpha-D-ribose 1-diphosphate; these read GD, NIST, and KHGSRSVSS. G81 contributes to the anthranilate binding site. Position 93 (S93) interacts with Mg(2+). R167 contributes to the anthranilate binding site. Mg(2+) contacts are provided by D225 and E226.

The protein belongs to the anthranilate phosphoribosyltransferase family. As to quaternary structure, homodimer. Mg(2+) serves as cofactor.

The catalysed reaction is N-(5-phospho-beta-D-ribosyl)anthranilate + diphosphate = 5-phospho-alpha-D-ribose 1-diphosphate + anthranilate. It participates in amino-acid biosynthesis; L-tryptophan biosynthesis; L-tryptophan from chorismate: step 2/5. Functionally, catalyzes the transfer of the phosphoribosyl group of 5-phosphorylribose-1-pyrophosphate (PRPP) to anthranilate to yield N-(5'-phosphoribosyl)-anthranilate (PRA). The protein is Anthranilate phosphoribosyltransferase of Actinobacillus pleuropneumoniae serotype 5b (strain L20).